The following is a 321-amino-acid chain: Long form salivary protein D7L1 (321 aa).

An N-terminal signal peptide occupies residues Met1–Ala17. 2 cysteine pairs are disulfide-bonded: Cys34-Cys71 and Cys67-Cys124. Trp55 contacts leukotriene E4. Leukotriene E4-binding residues include Gly148 and Lys167. Intrachain disulfides connect Cys175/Cys210, Cys191/Cys319, and Cys250/Cys268. Noradrenaline is bound by residues Glu176, Arg194, and His207. Residues Asp283 and Glu286 each contribute to the noradrenaline site.

It belongs to the PBP/GOBP family. In terms of assembly, (Microbial infection) Interacts with envelope protein of dengue virus type 2. Saliva (at protein level). Female salivary gland (at protein level). Detected in the head and thorax of the female mosquitoes, where the salivary glands are located. Expressed in the distal-lateral and medial lobes of the female salivary gland but not in the carcass. No or low-level expression in the adult male mosquito tissues.

It is found in the secreted. In terms of biological role, modulates blood feeding of female mosquitoes on vertebrate species by binding and sequestering different mediators involved in the host response, such as biogenic amines and eicosanoids. Binds serotonin, histamine, leukotriene B4, leukotriene C4, leukotriene D4, leukotriene E4, adrenaline and noradrenaline. Does not bind tryptamine and U-46619, a stable analog of thromboxane A2. Exhibits vasodilating activity. Inhibits agonist-induced platelet aggregation but not blood clotting. Inhibits noradrenaline-induced smooth muscle contraction. Promotes an influx of host neutrophils at the inoculation site. Its function is as follows. (Microbial infection) Probably promotes Plasmodium gallinaceum oocyst development in mosquito midgut. Functionally, (Microbial infection) Exhibits antiviral activity against dengue virus type 2 probably through a direct interaction with dengue virus virions. This is Long form salivary protein D7L1 (D7) from Aedes aegypti (Yellowfever mosquito).